A 220-amino-acid chain; its full sequence is Ribosomal RNA large subunit methyltransferase E (220 aa).

Positions 60, 62, 92, 108, and 133 each coordinate S-adenosyl-L-methionine. The active-site Proton acceptor is Lys-173. The segment at 197-220 (RKPKASRDKSSETFILGRQLKQPR) is disordered.

The protein belongs to the class I-like SAM-binding methyltransferase superfamily. RNA methyltransferase RlmE family.

The protein localises to the cytoplasm. It catalyses the reaction uridine(2552) in 23S rRNA + S-adenosyl-L-methionine = 2'-O-methyluridine(2552) in 23S rRNA + S-adenosyl-L-homocysteine + H(+). Its function is as follows. Specifically methylates the uridine in position 2552 of 23S rRNA at the 2'-O position of the ribose in the fully assembled 50S ribosomal subunit. This is Ribosomal RNA large subunit methyltransferase E from Burkholderia ambifaria (strain MC40-6).